Here is a 513-residue protein sequence, read N- to C-terminus: Histidine ammonia-lyase (513 aa).

Positions 144–146 (ASG) form a cross-link, 5-imidazolinone (Ala-Gly). Residue serine 145 is modified to 2,3-didehydroalanine (Ser).

The protein belongs to the PAL/histidase family. In terms of processing, contains an active site 4-methylidene-imidazol-5-one (MIO), which is formed autocatalytically by cyclization and dehydration of residues Ala-Ser-Gly.

It is found in the cytoplasm. The catalysed reaction is L-histidine = trans-urocanate + NH4(+). The protein operates within amino-acid degradation; L-histidine degradation into L-glutamate; N-formimidoyl-L-glutamate from L-histidine: step 1/3. The polypeptide is Histidine ammonia-lyase (Streptococcus pyogenes serotype M49 (strain NZ131)).